The following is a 165-amino-acid chain: 2-C-methyl-D-erythritol 2,4-cyclodiphosphate synthase (165 aa).

D12 and H14 together coordinate a divalent metal cation. 4-CDP-2-C-methyl-D-erythritol 2-phosphate contacts are provided by residues 12–14 and 38–39; these read DIH and HS. H46 is a binding site for a divalent metal cation. 4-CDP-2-C-methyl-D-erythritol 2-phosphate-binding positions include 60 to 62, 136 to 139, and R146; these read DIG and TTNE.

Belongs to the IspF family. In terms of assembly, homotrimer. A divalent metal cation serves as cofactor.

The catalysed reaction is 4-CDP-2-C-methyl-D-erythritol 2-phosphate = 2-C-methyl-D-erythritol 2,4-cyclic diphosphate + CMP. Its pathway is isoprenoid biosynthesis; isopentenyl diphosphate biosynthesis via DXP pathway; isopentenyl diphosphate from 1-deoxy-D-xylulose 5-phosphate: step 4/6. Functionally, involved in the biosynthesis of isopentenyl diphosphate (IPP) and dimethylallyl diphosphate (DMAPP), two major building blocks of isoprenoid compounds. Catalyzes the conversion of 4-diphosphocytidyl-2-C-methyl-D-erythritol 2-phosphate (CDP-ME2P) to 2-C-methyl-D-erythritol 2,4-cyclodiphosphate (ME-CPP) with a corresponding release of cytidine 5-monophosphate (CMP). This is 2-C-methyl-D-erythritol 2,4-cyclodiphosphate synthase from Nostoc sp. (strain PCC 7120 / SAG 25.82 / UTEX 2576).